Consider the following 866-residue polypeptide: Retinoblastoma-related protein 2 (866 aa).

A domain A region spans residues 274 to 475 (TPITSAMTTA…EKGSSLYNSL (202 aa)). The segment at 274–721 (TPITSAMTTA…NEVFVPAAKP (448 aa)) is pocket. The spacer stretch occupies residues 476 to 593 (IVARPSVASE…PVGGNEKCAD (118 aa)). A disordered region spans residues 513–551 (LPATPSKKRAAGRDDNADPRSPKRPCNESRSPVVEHNLQ). Over residues 523–539 (AGRDDNADPRSPKRPCN) the composition is skewed to basic and acidic residues. The domain B stretch occupies residues 594–721 (VTIQIFFSKI…NEVFVPAAKP (128 aa)). 2 disordered regions span residues 731-754 (TRPE…PFPN) and 839-866 (SLGQ…KPDT). Residues 841 to 850 (GQPNGGSTSL) are compositionally biased toward polar residues.

The protein belongs to the retinoblastoma protein (RB) family. Ubiquitous.

Its subcellular location is the nucleus. Functionally, regulator of biological processes that recruits a histone deacetylase to control gene transcription. May play a role in the entry into mitosis, negatively regulating the cell proliferation. Formation of stable complexes with geminiviridae replication-associated proteins may create a cellular environment which favors viral DNA replication. This chain is Retinoblastoma-related protein 2 (RBR2), found in Zea mays (Maize).